A 623-amino-acid polypeptide reads, in one-letter code: Regulatory solute carrier protein family 1 member 1 (623 aa).

3 stretches are compositionally biased toward polar residues: residues 1 to 16 (MSSLPTSDGFNHQAHP), 83 to 99 (CASSADNAPANQTPAIP), and 133 to 144 (EASLSVTTTRMQ). Disordered regions lie at residues 1-48 (MSSL…PDSI), 71-99 (RKEQLPLQDPSDCASSADNAPANQTPAIP), 116-189 (SAEG…APHD), and 433-493 (EELT…PHCT). Basic and acidic residues-rich tracts occupy residues 150–159 (IGEKGWHPEY), 170–180 (QHEEPRNEQHE), and 460–473 (LVDKENVPRSRESV). Residues 474–491 (NESSLVTLDSAKTSNQPH) are compositionally biased toward polar residues. The region spanning 577–617 (IFPAADIDRILRAGFTLQEALGALHRVGGNADLALLVLLAK) is the UBA domain.

Interacts with YRDC. In terms of tissue distribution, renal outer cortex and outer medulla, small intestine and liver.

It is found in the cell membrane. The protein localises to the nucleus. It localises to the golgi apparatus. The protein resides in the trans-Golgi network. Functionally, mediates transcriptional and post-transcriptional regulation of SLC5A1. Inhibits a dynamin and PKC-dependent exocytotic pathway of SLC5A1. Also involved in transcriptional regulation of SLC22A2. Exhibits glucose-dependent, short-term inhibition of SLC5A1 and SLC22A2 by inhibiting the release of vesicles from the trans-Golgi network. The chain is Regulatory solute carrier protein family 1 member 1 (RSC1A1) from Sus scrofa (Pig).